Reading from the N-terminus, the 299-residue chain is tRNA dimethylallyltransferase (299 aa).

G22 to T29 provides a ligand contact to ATP. A substrate-binding site is contributed by T24–T29. Interaction with substrate tRNA regions lie at residues D47 to Q50 and Q172 to R176.

The protein belongs to the IPP transferase family. As to quaternary structure, monomer. It depends on Mg(2+) as a cofactor.

It catalyses the reaction adenosine(37) in tRNA + dimethylallyl diphosphate = N(6)-dimethylallyladenosine(37) in tRNA + diphosphate. Its function is as follows. Catalyzes the transfer of a dimethylallyl group onto the adenine at position 37 in tRNAs that read codons beginning with uridine, leading to the formation of N6-(dimethylallyl)adenosine (i(6)A). In Endomicrobium trichonymphae, this protein is tRNA dimethylallyltransferase.